We begin with the raw amino-acid sequence, 997 residues long: MSEEKIKVSELAKEFPAVPNKDMLRALRELGASAKSMAGSLTTEEAARVREHFAEQKQADAERSGSHPNVIVRRRRKDADKADAPEVTEAAPAAREEVAPPAEEKPAAVEAPAQAEPVAEAPAASPHKVEEKAAPEAAKAEPAEKAKSSKARVVSAARVISRPGEEEEKKPEPVVESKPEPVAEISPVAAALAAREAAARAEEKSSEKGEEKGAKAARLARPDASAMPEGSSAPTLPQRAPEARTEAWKDADASAAADAAPRRAPRADGGQAPSAAPQVRIISRPAPGSQPDRSTRPAGGRPGAPGGPRGDSAGRPPRPGGPRPSGPGGPRPAGGPRPGGFGQQPAAPASPTDTRDGQSKKKRLKGRRTVDFQQGDFGGRRDDDDSQRLNRGKGRRKGGKPTSSQATQPLKAAKRKIRVTEAIRVADMAHQMGLKANEIIKVLFGLGVMATINQALDFDTATLVASEFGYEVEKAGFSEDDYLTPKEVDAPETLKPRPPVVTIMGHVDHGKTSLLDAIRKSNVTSGEAGGITQHIGAYHVKTKRGEIVFLDTPGHEAFTAMRARGAQVTDLVILVVAADDGVMEQTREAINHARAAGVPIMVAVNKMDKPSADPDRVLRELAELGLQAEEWGGDTIVAKVAAKTRMGLDDLLEMVALQSEIMELKANPDKAAKGHIVEAKLDKGRGPVATVLIQEGTLRQGDSFVCGPFSGRVRALMNDQGKKVKEAGPSLPVEVQGFEGVPEAGEEFFVVSDEKLARRIADSRAIKQRERELASESRVTLETFLSQRKSDQETLTLNLVLKSDVQGSLEAITEALLKQSTDKVRINVVHGGTGAITESDILLASASQAIIIGFNVRPTAKIKDVAEHENVDIRFYEIIYKLVDDIKSAMAGLLAPVQREVYLGQAEVRDTFSVPKIGLIAGSYVADGKIARNAGVRLLRDGVVVYTGKISSLKRFKDDAREVVKGNECGVGLENFNDVKIGDIIEAFETVEEAATL.

The segment at 36–415 is disordered; the sequence is SMAGSLTTEE…ATQPLKAAKR (380 aa). 2 stretches are compositionally biased toward basic and acidic residues: residues 45–65 and 94–107; these read EAARVREHFAEQKQADAERSG and AREEVAPPAEEKPA. Positions 108–126 are enriched in low complexity; it reads AVEAPAQAEPVAEAPAASP. The span at 127–147 shows a compositional bias: basic and acidic residues; the sequence is HKVEEKAAPEAAKAEPAEKAK. A compositionally biased stretch (low complexity) spans 151–162; that stretch reads ARVVSAARVISR. Residues 163–181 are compositionally biased toward basic and acidic residues; sequence PGEEEEKKPEPVVESKPEP. Residues 182-196 show a composition bias toward low complexity; the sequence is VAEISPVAAALAARE. 2 stretches are compositionally biased toward basic and acidic residues: residues 197–214 and 241–252; these read AAARAEEKSSEKGEEKGA and PEARTEAWKDAD. Residues 300–309 are compositionally biased toward gly residues; sequence GRPGAPGGPR. The span at 316 to 335 shows a compositional bias: pro residues; that stretch reads PPRPGGPRPSGPGGPRPAGG. Residues 378 to 388 are compositionally biased toward basic and acidic residues; sequence GGRRDDDDSQR. Positions 390 to 399 are enriched in basic residues; it reads NRGKGRRKGG. The region spanning 496–665 is the tr-type G domain; that stretch reads PRPPVVTIMG…ALQSEIMELK (170 aa). Positions 505 to 512 are G1; sequence GHVDHGKT. 505-512 is a GTP binding site; that stretch reads GHVDHGKT. The G2 stretch occupies residues 530-534; sequence GITQH. The G3 stretch occupies residues 551-554; the sequence is DTPG. Residues 551-555 and 605-608 each bind GTP; these read DTPGH and NKMD. The tract at residues 605–608 is G4; the sequence is NKMD. The interval 641 to 643 is G5; the sequence is AAK.

It belongs to the TRAFAC class translation factor GTPase superfamily. Classic translation factor GTPase family. IF-2 subfamily.

Its subcellular location is the cytoplasm. Functionally, one of the essential components for the initiation of protein synthesis. Protects formylmethionyl-tRNA from spontaneous hydrolysis and promotes its binding to the 30S ribosomal subunits. Also involved in the hydrolysis of GTP during the formation of the 70S ribosomal complex. This Desulfovibrio desulfuricans (strain ATCC 27774 / DSM 6949 / MB) protein is Translation initiation factor IF-2.